The following is a 152-amino-acid chain: MAERFKILVLNGPNLNLLGQREPELYGKQSLDDIADSLGAIAKQHATALDFRQSNAEHQLIDWIQQAAKDSVDYIVINPAAYAHTSVALRDALLAVKIPFIEVHLSNIYRRESFRHHSYLADVADGVICGLGARGYEYALQAALTTLNNTDN.

The Proton acceptor role is filled by Tyr26. 3 residues coordinate substrate: Asn78, His84, and Asp91. Catalysis depends on His104, which acts as the Proton donor. Substrate contacts are provided by residues 105 to 106 (LS) and Arg115.

The protein belongs to the type-II 3-dehydroquinase family. Homododecamer.

The catalysed reaction is 3-dehydroquinate = 3-dehydroshikimate + H2O. It functions in the pathway metabolic intermediate biosynthesis; chorismate biosynthesis; chorismate from D-erythrose 4-phosphate and phosphoenolpyruvate: step 3/7. In terms of biological role, catalyzes a trans-dehydration via an enolate intermediate. The protein is 3-dehydroquinate dehydratase of Idiomarina loihiensis (strain ATCC BAA-735 / DSM 15497 / L2-TR).